The primary structure comprises 208 residues: ATP-dependent Clp protease proteolytic subunit (208 aa).

Ser106 serves as the catalytic Nucleophile. Residue His131 is part of the active site.

It belongs to the peptidase S14 family. Fourteen ClpP subunits assemble into 2 heptameric rings which stack back to back to give a disk-like structure with a central cavity, resembling the structure of eukaryotic proteasomes.

The protein localises to the cytoplasm. It catalyses the reaction Hydrolysis of proteins to small peptides in the presence of ATP and magnesium. alpha-casein is the usual test substrate. In the absence of ATP, only oligopeptides shorter than five residues are hydrolyzed (such as succinyl-Leu-Tyr-|-NHMec, and Leu-Tyr-Leu-|-Tyr-Trp, in which cleavage of the -Tyr-|-Leu- and -Tyr-|-Trp bonds also occurs).. In terms of biological role, cleaves peptides in various proteins in a process that requires ATP hydrolysis. Has a chymotrypsin-like activity. Plays a major role in the degradation of misfolded proteins. In Caulobacter sp. (strain K31), this protein is ATP-dependent Clp protease proteolytic subunit.